The primary structure comprises 104 residues: Large ribosomal subunit protein bL21 (104 aa).

Positions 78-91 (KRRRQNSRRKRGHR) are enriched in basic residues. The tract at residues 78 to 104 (KRRRQNSRRKRGHRQDHTVVRITGISA) is disordered.

The protein belongs to the bacterial ribosomal protein bL21 family. As to quaternary structure, part of the 50S ribosomal subunit. Contacts protein L20.

In terms of biological role, this protein binds to 23S rRNA in the presence of protein L20. The polypeptide is Large ribosomal subunit protein bL21 (Methylobacterium radiotolerans (strain ATCC 27329 / DSM 1819 / JCM 2831 / NBRC 15690 / NCIMB 10815 / 0-1)).